A 212-amino-acid chain; its full sequence is Regulatory protein RecX (212 aa).

The protein belongs to the RecX family.

The protein localises to the cytoplasm. Modulates RecA activity. The protein is Regulatory protein RecX of Clostridium botulinum (strain Alaska E43 / Type E3).